The sequence spans 118 residues: Small ribosomal subunit protein uS13 (118 aa).

A disordered region spans residues 93–118 (RGLPVRGQRTKTNARTRKGPRKPIRK).

The protein belongs to the universal ribosomal protein uS13 family. In terms of assembly, part of the 30S ribosomal subunit. Forms a loose heterodimer with protein S19. Forms two bridges to the 50S subunit in the 70S ribosome.

Functionally, located at the top of the head of the 30S subunit, it contacts several helices of the 16S rRNA. In the 70S ribosome it contacts the 23S rRNA (bridge B1a) and protein L5 of the 50S subunit (bridge B1b), connecting the 2 subunits; these bridges are implicated in subunit movement. Contacts the tRNAs in the A and P-sites. This chain is Small ribosomal subunit protein uS13, found in Pseudomonas syringae pv. tomato (strain ATCC BAA-871 / DC3000).